The chain runs to 402 residues: MVDAAIRGTLPAGTGTNASQRGTIAMVAGEASGDLLASLMLGGLKARLGDTVSYAGIGGKRMMTEGFVSQWPMETLSVNGYVEVLGSLREILATRRAIRDSLLANPPLCFIGVDAPDFNFGLEVPLRRAGIPVVHFVSPSIWAWRGGRIRTIARAVDHILCLFPFEPEIYAKAGIPATYVGHPLADVIPMVPDVAGARAALDLPAGCRVVAVLPGSRQSEVRNLGATFFAAMARMHRMDPNLAFVLPAASAPLRAIVEELHQQYPELRLTIVDGNSHQAMEAADVVLLASGTATLEAALYKKPMVISYKVPWLTAQIMKRQGYLPYVGLPNILSGRFVVPELLQDDATPEALARETLLQLNDQGNIAFLYEHFTRMHETLKCNTAQLAADVVVDLMRSRGLV.

Belongs to the LpxB family.

It carries out the reaction a lipid X + a UDP-2-N,3-O-bis[(3R)-3-hydroxyacyl]-alpha-D-glucosamine = a lipid A disaccharide + UDP + H(+). Its pathway is bacterial outer membrane biogenesis; LPS lipid A biosynthesis. Its function is as follows. Condensation of UDP-2,3-diacylglucosamine and 2,3-diacylglucosamine-1-phosphate to form lipid A disaccharide, a precursor of lipid A, a phosphorylated glycolipid that anchors the lipopolysaccharide to the outer membrane of the cell. The chain is Lipid-A-disaccharide synthase from Cupriavidus pinatubonensis (strain JMP 134 / LMG 1197) (Cupriavidus necator (strain JMP 134)).